The sequence spans 904 residues: MFHRPASVRRFVTTAVALGLLSTLSTGARAGARTHEPPPRPTTVSSTAGSTTALTGYAIQSTAKVTDPAAAVSSPGYPASGWYPAGARSTVLAALLAGGKYADPFYSTNQQKIPKADFQVPWWYRSDFTVADTSARTYLDFSGVISAADVFVNGRQIARSADVAGAYTRHELDVTSLVREGANTVAFRIQPNNPNKNLTMGWIDWLEPPPDQNMGIVRDVLVRRGGPVALRDAHVITRLDVPSLATADLTVKARARNDSDAAITATVSGSVGATSFRRSVALAAHETKTVTFTPADTPGLHLTSPRVWWPAGMGGQPLYALDLSASVSETVSDTVHESFGIRDVKAPLNSDGARQYSVNGRRLLIKGGGWSPDEFLRWDSTYVEDRLRYALDLGLNTIRLEGHIEPDEFFDLADRYGILTLPGWECCNKWEGNVNGSGSGDEWTAADYPVAKASMAAEAARLRDHPSVVSFLIGSDFAPDAKIEKTYLDALKAADWPTPVVAAASDKSSPVSGSSGMKMTGPYDWIPPNYWYAKREGGATGFNSETSAGPDIPTLDTLRRMMTPAELDTLWKNPGAKQYHRSPSSVFGTLKIYDAALAGRYGAPTGLTDYVRKAQLAQYENVRAQFEAYGRGATDASKPATGVIYWMFNSGWTSLHWQLLDRYLDQGGAYFGAKKANEPLHVQYSYDDRSVVVVNNRPAAVSGLTARVTLFNTDGTQKYDKSATGLSVAGDGAHSTALTLPSSVSGLSTTYLARLVLTDSAGKEVSRNVYWLSTRPDTLDWAHTDWYYTPTTSYADLKGLGSMARVPVSATASTTAGTDGASTTTVTVRNTGSGRTPSLFTDVHLVDSKGKPVLPVQWSDNEVSLWPGESATLTVTYRTADLHGSAPRVRVSGWNTAEQTVPAA.

The first 32 residues, 1 to 32 (MFHRPASVRRFVTTAVALGLLSTLSTGARAGA), serve as a signal peptide directing secretion. The tract at residues 28–49 (ARAGARTHEPPPRPTTVSSTAG) is disordered. D476 serves as the catalytic Proton donor. E545 (nucleophile) is an active-site residue. Residues 813-828 (STTAGTDGASTTTVTV) show a composition bias toward low complexity. Positions 813-833 (STTAGTDGASTTTVTVRNTGS) are disordered.

This sequence belongs to the glycosyl hydrolase 2 family. Monomer.

The protein resides in the secreted. The enzyme catalyses Hydrolysis of chitosan or chitosan oligosaccharides to remove successive D-glucosamine residues from the non-reducing termini.. Its function is as follows. Hydrolyzes chitosan and chitooligosaccharides with retention of anomeric configuration. Has no beta-mannosidase activity. The polypeptide is Exo-beta-D-glucosaminidase (Streptomyces avermitilis (strain ATCC 31267 / DSM 46492 / JCM 5070 / NBRC 14893 / NCIMB 12804 / NRRL 8165 / MA-4680)).